A 568-amino-acid chain; its full sequence is Protein adenylyltransferase SelO, mitochondrial (568 aa).

ATP is bound by residues G120, G122, R123, K144, D156, G157, R208, and R215. D287 (proton acceptor) is an active-site residue. N288 and D297 together coordinate Mg(2+). D297 contacts ATP.

This sequence belongs to the SELO family. Requires Mg(2+) as cofactor. Post-translationally, forms probably one or more intrachain disulfide bridges.

The protein localises to the mitochondrion. The enzyme catalyses L-tyrosyl-[protein] + ATP = O-(5'-adenylyl)-L-tyrosyl-[protein] + diphosphate. Its function is as follows. Catalyzes the transfer of adenosine 5'-monophosphate (AMP) to Tyr residues of target mitochondrial proteins (AMPylation). Involved in redox homeostasis by regulating the cellular response to oxidative stress. Regulates protein S-glutathionylation levels possibly by AMPylation of deglutathionylation enzymes such as glutaredoxins. The chain is Protein adenylyltransferase SelO, mitochondrial from Schizosaccharomyces pombe (strain 972 / ATCC 24843) (Fission yeast).